The following is a 447-amino-acid chain: N-succinylarginine dihydrolase (447 aa).

Residues 19-28 (AGLSFGNEAS), N110, and 137-138 (HR) each bind substrate. Residue E174 is part of the active site. R212 is a binding site for substrate. Residue H248 is part of the active site. Positions 250 and 359 each coordinate substrate. C365 (nucleophile) is an active-site residue.

Belongs to the succinylarginine dihydrolase family. In terms of assembly, homodimer.

The enzyme catalyses N(2)-succinyl-L-arginine + 2 H2O + 2 H(+) = N(2)-succinyl-L-ornithine + 2 NH4(+) + CO2. It participates in amino-acid degradation; L-arginine degradation via AST pathway; L-glutamate and succinate from L-arginine: step 2/5. Catalyzes the hydrolysis of N(2)-succinylarginine into N(2)-succinylornithine, ammonia and CO(2). In Salmonella schwarzengrund (strain CVM19633), this protein is N-succinylarginine dihydrolase.